The chain runs to 198 residues: Glycerol-3-phosphate acyltransferase 2 (198 aa).

Helical transmembrane passes span 4-24 (TYLL…LVVG), 71-91 (LPII…AVLG), 113-133 (LLCY…SLLF), and 147-167 (VVAV…AMCL).

The protein belongs to the PlsY family. Probably interacts with PlsX.

It localises to the cell membrane. The enzyme catalyses an acyl phosphate + sn-glycerol 3-phosphate = a 1-acyl-sn-glycero-3-phosphate + phosphate. It participates in lipid metabolism; phospholipid metabolism. Functionally, catalyzes the transfer of an acyl group from acyl-phosphate (acyl-PO(4)) to glycerol-3-phosphate (G3P) to form lysophosphatidic acid (LPA). This enzyme utilizes acyl-phosphate as fatty acyl donor, but not acyl-CoA or acyl-ACP. The protein is Glycerol-3-phosphate acyltransferase 2 of Bacillus cereus (strain ATCC 10987 / NRS 248).